The primary structure comprises 89 residues: Small ribosomal subunit protein uS15 (89 aa).

Belongs to the universal ribosomal protein uS15 family. As to quaternary structure, part of the 30S ribosomal subunit. Forms a bridge to the 50S subunit in the 70S ribosome, contacting the 23S rRNA.

Its function is as follows. One of the primary rRNA binding proteins, it binds directly to 16S rRNA where it helps nucleate assembly of the platform of the 30S subunit by binding and bridging several RNA helices of the 16S rRNA. In terms of biological role, forms an intersubunit bridge (bridge B4) with the 23S rRNA of the 50S subunit in the ribosome. This is Small ribosomal subunit protein uS15 from Mycobacterium marinum (strain ATCC BAA-535 / M).